We begin with the raw amino-acid sequence, 257 residues long: Receptor expression-enhancing protein 4 (257 aa).

Transmembrane regions (helical) follow at residues 1 to 21 (MVSW…YPAY) and 42 to 62 (WIVF…ISWF). Phosphoserine is present on residues Ser-152 and Ser-194. Residues 177–257 (VPRRRPPIGY…KKAMPSDMDS (81 aa)) are disordered. The residue at position 196 (Thr-196) is a Phosphothreonine. Ser-202 and Ser-253 each carry phosphoserine.

Belongs to the DP1 family.

Its subcellular location is the endoplasmic reticulum membrane. Its function is as follows. Microtubule-binding protein required to ensure proper cell division and nuclear envelope reassembly by sequestering the endoplasmic reticulum away from chromosomes during mitosis. Probably acts by clearing the endoplasmic reticulum membrane from metaphase chromosomes. This chain is Receptor expression-enhancing protein 4 (Reep4), found in Mus musculus (Mouse).